The chain runs to 166 residues: Large ribosomal subunit protein uL10 (166 aa).

Part of the ribosomal stalk of the 50S ribosomal subunit. The N-terminus interacts with L11 and 23S rRNA to form the base of the stalk. The C-terminus forms an elongated spine to which L12 dimers bind in a sequential fashion forming a pentameric L10(L12)2(L12)2 complex.

In terms of biological role, forms part of the ribosomal stalk, playing a central role in the interaction of the ribosome with GTP-bound translation factors (such as IF-2, EF-Tu, EF-G and RF3). This is Large ribosomal subunit protein uL10 (rplJ) from Bacillus subtilis (strain 168).